The following is a 357-amino-acid chain: Probable dual-specificity RNA methyltransferase RlmN (357 aa).

Glu92 serves as the catalytic Proton acceptor. The Radical SAM core domain maps to 98–330; it reads QEYGLSVCVT…KKNGINCVIR (233 aa). Cysteines 105 and 341 form a disulfide. [4Fe-4S] cluster-binding residues include Cys112, Cys116, and Cys119. S-adenosyl-L-methionine is bound by residues 164–165, Ser196, 219–221, and Asn297; these read GE and SLH. Catalysis depends on Cys341, which acts as the S-methylcysteine intermediate.

It belongs to the radical SAM superfamily. RlmN family. It depends on [4Fe-4S] cluster as a cofactor.

It is found in the cytoplasm. It catalyses the reaction adenosine(2503) in 23S rRNA + 2 reduced [2Fe-2S]-[ferredoxin] + 2 S-adenosyl-L-methionine = 2-methyladenosine(2503) in 23S rRNA + 5'-deoxyadenosine + L-methionine + 2 oxidized [2Fe-2S]-[ferredoxin] + S-adenosyl-L-homocysteine. The enzyme catalyses adenosine(37) in tRNA + 2 reduced [2Fe-2S]-[ferredoxin] + 2 S-adenosyl-L-methionine = 2-methyladenosine(37) in tRNA + 5'-deoxyadenosine + L-methionine + 2 oxidized [2Fe-2S]-[ferredoxin] + S-adenosyl-L-homocysteine. In terms of biological role, specifically methylates position 2 of adenine 2503 in 23S rRNA and position 2 of adenine 37 in tRNAs. The chain is Probable dual-specificity RNA methyltransferase RlmN from Enterococcus faecalis (strain ATCC 700802 / V583).